Here is a 90-residue protein sequence, read N- to C-terminus: UPF0297 protein lmo1503 (90 aa).

This sequence belongs to the UPF0297 family.

This Listeria monocytogenes serovar 1/2a (strain ATCC BAA-679 / EGD-e) protein is UPF0297 protein lmo1503.